A 430-amino-acid chain; its full sequence is Histidinol dehydrogenase (430 aa).

NAD(+)-binding residues include Y130, Q191, and N214. Substrate contacts are provided by S237, Q259, and H262. Residues Q259 and H262 each contribute to the Zn(2+) site. Residues E327 and H328 each act as proton acceptor in the active site. Substrate is bound by residues H328, D361, E415, and H420. Position 361 (D361) interacts with Zn(2+). H420 contributes to the Zn(2+) binding site.

The protein belongs to the histidinol dehydrogenase family. Zn(2+) is required as a cofactor.

It catalyses the reaction L-histidinol + 2 NAD(+) + H2O = L-histidine + 2 NADH + 3 H(+). The protein operates within amino-acid biosynthesis; L-histidine biosynthesis; L-histidine from 5-phospho-alpha-D-ribose 1-diphosphate: step 9/9. In terms of biological role, catalyzes the sequential NAD-dependent oxidations of L-histidinol to L-histidinaldehyde and then to L-histidine. In Zymomonas mobilis subsp. mobilis (strain ATCC 31821 / ZM4 / CP4), this protein is Histidinol dehydrogenase (hisD).